Reading from the N-terminus, the 514-residue chain is Nuclear hormone receptor family member nhr-85 (514 aa).

The interval 28–48 (TSFSSPPATSSSSLLSPSPSS) is disordered. A DNA-binding region (nuclear receptor) is located at residues 110–186 (TILCQVCSDK…VGMSRDAVRF (77 aa)). 2 consecutive NR C4-type zinc fingers follow at residues 113-133 (CQVC…CEGC) and 150-174 (CTRA…LKKC). The NR LBD domain occupies 216-514 (QYENLTEVMH…VSPVPTTLSE (299 aa)). The interval 465 to 514 (ERPRRISSSGAQEPLNLSLPHVRHQVKRDVDSDEQLEEMKVSPVPTTLSE) is disordered.

This sequence belongs to the nuclear hormone receptor family.

The protein resides in the nucleus. Functionally, orphan nuclear receptor. This chain is Nuclear hormone receptor family member nhr-85 (nhr-85), found in Caenorhabditis elegans.